We begin with the raw amino-acid sequence, 358 residues long: Peptide chain release factor 1 (358 aa).

N5-methylglutamine is present on Gln235.

The protein belongs to the prokaryotic/mitochondrial release factor family. Methylated by PrmC. Methylation increases the termination efficiency of RF1.

It is found in the cytoplasm. Peptide chain release factor 1 directs the termination of translation in response to the peptide chain termination codons UAG and UAA. The chain is Peptide chain release factor 1 from Neisseria gonorrhoeae (strain ATCC 700825 / FA 1090).